A 391-amino-acid chain; its full sequence is Formate-dependent phosphoribosylglycinamide formyltransferase (391 aa).

N(1)-(5-phospho-beta-D-ribosyl)glycinamide-binding positions include 18-19 (EL) and E78. Residues R110, K151, 156-161 (SSGKGQ), 191-194 (EEFI), and E199 contribute to the ATP site. One can recognise an ATP-grasp domain in the interval 115 to 305 (ELAHEELGIR…EFELHLRAIL (191 aa)). Positions 264 and 276 each coordinate Mg(2+). Residues D283, K353, and 360 to 361 (RR) each bind N(1)-(5-phospho-beta-D-ribosyl)glycinamide.

Belongs to the PurK/PurT family. As to quaternary structure, homodimer.

It carries out the reaction N(1)-(5-phospho-beta-D-ribosyl)glycinamide + formate + ATP = N(2)-formyl-N(1)-(5-phospho-beta-D-ribosyl)glycinamide + ADP + phosphate + H(+). It functions in the pathway purine metabolism; IMP biosynthesis via de novo pathway; N(2)-formyl-N(1)-(5-phospho-D-ribosyl)glycinamide from N(1)-(5-phospho-D-ribosyl)glycinamide (formate route): step 1/1. Involved in the de novo purine biosynthesis. Catalyzes the transfer of formate to 5-phospho-ribosyl-glycinamide (GAR), producing 5-phospho-ribosyl-N-formylglycinamide (FGAR). Formate is provided by PurU via hydrolysis of 10-formyl-tetrahydrofolate. The polypeptide is Formate-dependent phosphoribosylglycinamide formyltransferase (Nostoc sp. (strain PCC 7120 / SAG 25.82 / UTEX 2576)).